The chain runs to 461 residues: Cysteine--tRNA ligase (461 aa).

C27 provides a ligand contact to Zn(2+). Residues 29-39 (ITVYDYCHIGH) carry the 'HIGH' region motif. The Zn(2+) site is built by C208, H233, and E237. Residues 265 to 269 (KMSKS) carry the 'KMSKS' region motif. K268 is an ATP binding site.

Belongs to the class-I aminoacyl-tRNA synthetase family. Monomer. Requires Zn(2+) as cofactor.

It localises to the cytoplasm. It catalyses the reaction tRNA(Cys) + L-cysteine + ATP = L-cysteinyl-tRNA(Cys) + AMP + diphosphate. The protein is Cysteine--tRNA ligase of Chromohalobacter salexigens (strain ATCC BAA-138 / DSM 3043 / CIP 106854 / NCIMB 13768 / 1H11).